We begin with the raw amino-acid sequence, 1013 residues long: Mediator of RNA polymerase II transcription subunit 5 (1013 aa).

The protein belongs to the Mediator complex subunit 5 family. In terms of assembly, component of the Mediator complex.

The protein resides in the nucleus. Component of the Mediator complex, a coactivator involved in the regulated transcription of nearly all RNA polymerase II-dependent genes. Mediator functions as a bridge to convey information from gene-specific regulatory proteins to the basal RNA polymerase II transcription machinery. Mediator is recruited to promoters by direct interactions with regulatory proteins and serves as a scaffold for the assembly of a functional preinitiation complex with RNA polymerase II and the general transcription factors. This is Mediator of RNA polymerase II transcription subunit 5 (NUT1) from Aspergillus oryzae (strain ATCC 42149 / RIB 40) (Yellow koji mold).